The primary structure comprises 837 residues: ABC transporter A family member 8 (837 aa).

7 helical membrane passes run 29–49 (YFSTIIELLSPIVFVLIFYII), 244–264 (VVSLFGGLFYYCAIMISFIFL), 303–323 (LIICLLLIAIGAICKLPFFLG), 326–346 (FLVLLLNFFLFAISSSSMAFF), 356–376 (VAIGIGMAFFIVGSGLQLTFN), 393–413 (GAAFVRVILFILPMFHFSKVL), and 455–475 (LAYMFILVIVYLSLSAIIEYA). One can recognise an ABC transporter domain in the interval 516-750 (IRGLSKTFNK…YGEGYSVQVI (235 aa)). 553–560 (GSNGAGKS) lines the ATP pocket.

The protein belongs to the ABC transporter superfamily. ABCA family.

The protein resides in the membrane. The protein is ABC transporter A family member 8 (abcA8) of Dictyostelium discoideum (Social amoeba).